The chain runs to 1406 residues: Ubiquitin carboxyl-terminal hydrolase 6 (1406 aa).

Residues glycine 100–glycine 292 enclose the Rab-GAP TBC domain. Positions lysine 348–threonine 380 are disordered. In terms of domain architecture, USP spans threonine 532–glutamine 1369. The Nucleophile role is filled by cysteine 541. Residues histidine 1120–asparagine 1231 are disordered. Positions glutamate 1129–leucine 1155 are enriched in basic and acidic residues. Residues leucine 1156–proline 1197 are compositionally biased toward low complexity. Histidine 1328 serves as the catalytic Proton acceptor. Residues lysine 1384–glutamine 1406 form a disordered region.

Belongs to the peptidase C19 family. Interacts with RAC1 and CDC42. Interacts (via Rab-GAP TBC domain) with ARF6. Interacts with calmodulin (CALM1, CALM2 and/or CALM3); the interaction is calcium-dependent. Post-translationally, monubiquitinated; ubiquitination is calmodulin and calcium dependent. Testis specific. Expressed in various cancer cell lines.

The protein localises to the cell membrane. It is found in the cytoplasm. Its subcellular location is the endosome. The enzyme catalyses Thiol-dependent hydrolysis of ester, thioester, amide, peptide and isopeptide bonds formed by the C-terminal Gly of ubiquitin (a 76-residue protein attached to proteins as an intracellular targeting signal).. Its function is as follows. Deubiquitinase with an ATP-independent isopeptidase activity, cleaving at the C-terminus of the ubiquitin moiety. Catalyzes its own deubiquitination. In vitro, isoform 2, but not isoform 3, shows deubiquitinating activity. Promotes plasma membrane localization of ARF6 and selectively regulates ARF6-dependent endocytic protein trafficking. Is able to initiate tumorigenesis by inducing the production of matrix metalloproteinases following NF-kappa-B activation. May act as a GTPase-activating protein for RAB3A. In Homo sapiens (Human), this protein is Ubiquitin carboxyl-terminal hydrolase 6 (USP6).